The primary structure comprises 339 residues: Heat-inducible transcription repressor HrcA (339 aa).

It belongs to the HrcA family.

Negative regulator of class I heat shock genes (grpE-dnaK-dnaJ and groELS operons). Prevents heat-shock induction of these operons. This chain is Heat-inducible transcription repressor HrcA, found in Clostridium perfringens (strain ATCC 13124 / DSM 756 / JCM 1290 / NCIMB 6125 / NCTC 8237 / Type A).